The chain runs to 307 residues: MKHLLSMADLEKDELFEILKLAEKLKEERYKGVVTDYLKNKSLAMIFELPSTRTRVSFEVAMTDLGGHALYLGWDELQLGRGEPIKDTARVLSRYVHAVMMRVREHSTIEEFARYSTVPVINGLSNLEHPCQVIADLLTIYEYRGDFKDVTLAWVGDGNNVCNSMILAAALTGMKMVISTPENYDPNPEIVKKAEEMGAKLRFVRDPKEAVKEADVIYTDVWTSMGQEAEKEARLKAFQPYQVSDELLKFSKDDVVVMHCLPAHRGEEITDEVMEGKHSIVFDQAENRLHAQKAILLKLLGKESEVY.

Residues 51-54 (STRT), glutamine 78, arginine 102, and 129-132 (HPCQ) contribute to the carbamoyl phosphate site. L-ornithine is bound by residues asparagine 160, aspartate 220, and 224–225 (SM). Carbamoyl phosphate contacts are provided by residues 260-261 (CL) and arginine 288.

This sequence belongs to the aspartate/ornithine carbamoyltransferase superfamily. OTCase family.

It localises to the cytoplasm. It carries out the reaction carbamoyl phosphate + L-ornithine = L-citrulline + phosphate + H(+). It participates in amino-acid biosynthesis; L-arginine biosynthesis; L-arginine from L-ornithine and carbamoyl phosphate: step 1/3. Functionally, reversibly catalyzes the transfer of the carbamoyl group from carbamoyl phosphate (CP) to the N(epsilon) atom of ornithine (ORN) to produce L-citrulline. The protein is Ornithine carbamoyltransferase (argF) of Archaeoglobus fulgidus (strain ATCC 49558 / DSM 4304 / JCM 9628 / NBRC 100126 / VC-16).